Reading from the N-terminus, the 204-residue chain is MSIKYVATSKLPTPWGVFAMHGFEDTESGKEHVALTFGTLSADEPVLGRIHSECLTGDALFSLRCDCGFQLQAAMQNIAETGSGFILYLRQEGRGIGLLNKIRAYELQDKGANTVEANEQLGFEADMRKYDMIKPILEQIGVKHVRLMTNNPRKVKAMKEFGIEVVERVPLQVGKNRYNEAYLKTKSTELGHMMSEYHFMDENK.

49–53 (RIHSE) provides a ligand contact to GTP. Zn(2+)-binding residues include Cys-54, Cys-65, and Cys-67. GTP contacts are provided by residues Gln-70, 92-94 (EGR), and Thr-114. Asp-126 (proton acceptor) is an active-site residue. Arg-128 acts as the Nucleophile in catalysis. GTP-binding residues include Thr-149 and Lys-154.

Belongs to the GTP cyclohydrolase II family. The cofactor is Zn(2+).

The enzyme catalyses GTP + 4 H2O = 2,5-diamino-6-hydroxy-4-(5-phosphoribosylamino)-pyrimidine + formate + 2 phosphate + 3 H(+). Its pathway is cofactor biosynthesis; riboflavin biosynthesis; 5-amino-6-(D-ribitylamino)uracil from GTP: step 1/4. Catalyzes the conversion of GTP to 2,5-diamino-6-ribosylamino-4(3H)-pyrimidinone 5'-phosphate (DARP), formate and pyrophosphate. The sequence is that of GTP cyclohydrolase-2 from Shewanella baltica (strain OS155 / ATCC BAA-1091).